Reading from the N-terminus, the 613-residue chain is tRNA 5-methylaminomethyl-2-thiouridine biosynthesis bifunctional protein MnmC (613 aa).

Residues 1–225 are tRNA (mnm(5)s(2)U34)-methyltransferase; that stretch reads MKKAKLIFKD…KREMIKAYLE (225 aa). Positions 252-613 are FAD-dependent cmnm(5)s(2)U34 oxidoreductase; that stretch reads IGAGISSAVL…FLIRKLKKGL (362 aa).

The protein in the N-terminal section; belongs to the methyltransferase superfamily. tRNA (mnm(5)s(2)U34)-methyltransferase family. It in the C-terminal section; belongs to the DAO family. FAD is required as a cofactor.

The protein localises to the cytoplasm. The enzyme catalyses 5-aminomethyl-2-thiouridine(34) in tRNA + S-adenosyl-L-methionine = 5-methylaminomethyl-2-thiouridine(34) in tRNA + S-adenosyl-L-homocysteine + H(+). Catalyzes the last two steps in the biosynthesis of 5-methylaminomethyl-2-thiouridine (mnm(5)s(2)U) at the wobble position (U34) in tRNA. Catalyzes the FAD-dependent demodification of cmnm(5)s(2)U34 to nm(5)s(2)U34, followed by the transfer of a methyl group from S-adenosyl-L-methionine to nm(5)s(2)U34, to form mnm(5)s(2)U34. This Campylobacter jejuni (strain RM1221) protein is tRNA 5-methylaminomethyl-2-thiouridine biosynthesis bifunctional protein MnmC.